The primary structure comprises 559 residues: Potassium-transporting ATPase potassium-binding subunit (559 aa).

Helical transmembrane passes span 5 to 25, 63 to 83, 131 to 151, 173 to 193, 254 to 274, 282 to 302, 327 to 347, 356 to 376, 379 to 399, 416 to 436, 483 to 503, and 525 to 545; these read GFLLLASYLLVLLVLARPLGM, LLAILLFNALGGLALFALLML, VGLTVQNFLSAATGIAVVFAL, ITLWLLLPLSLLVALFFIQQG, VQMLAIFLIPTALCFAFGEVV, AILWAMTLIFILCVAVVMWAE, FGILASSLFAVITTAASCGAV, ALGGMVPMWLMQIGEVVFGGV, GLYGMLLFVMLAVFIAGLMVG, MIALAILVTPTLVLLGTALAM, LLLAFCMLVGRFAVIIPVMAI, and ALFIGLLIGTVLLVGALTFIP.

The protein belongs to the KdpA family. In terms of assembly, the system is composed of three essential subunits: KdpA, KdpB and KdpC.

Its subcellular location is the cell inner membrane. Functionally, part of the high-affinity ATP-driven potassium transport (or Kdp) system, which catalyzes the hydrolysis of ATP coupled with the electrogenic transport of potassium into the cytoplasm. This subunit binds the periplasmic potassium ions and delivers the ions to the membrane domain of KdpB through an intramembrane tunnel. This chain is Potassium-transporting ATPase potassium-binding subunit, found in Klebsiella pneumoniae subsp. pneumoniae (strain ATCC 700721 / MGH 78578).